The sequence spans 220 residues: Deoxyribose-phosphate aldolase (220 aa).

Residue aspartate 89 is the Proton donor/acceptor of the active site. Lysine 151 serves as the catalytic Schiff-base intermediate with acetaldehyde. Lysine 180 (proton donor/acceptor) is an active-site residue.

This sequence belongs to the DeoC/FbaB aldolase family. DeoC type 1 subfamily.

It is found in the cytoplasm. The enzyme catalyses 2-deoxy-D-ribose 5-phosphate = D-glyceraldehyde 3-phosphate + acetaldehyde. The protein operates within carbohydrate degradation; 2-deoxy-D-ribose 1-phosphate degradation; D-glyceraldehyde 3-phosphate and acetaldehyde from 2-deoxy-alpha-D-ribose 1-phosphate: step 2/2. Catalyzes a reversible aldol reaction between acetaldehyde and D-glyceraldehyde 3-phosphate to generate 2-deoxy-D-ribose 5-phosphate. This chain is Deoxyribose-phosphate aldolase, found in Mycoplasmopsis pulmonis (strain UAB CTIP) (Mycoplasma pulmonis).